The primary structure comprises 217 residues: Ribonuclease HII (217 aa).

An RNase H type-2 domain is found at 27–216 (SQVAGVDEAG…VKESIQEGVC (190 aa)). Positions 33, 34, and 126 each coordinate a divalent metal cation.

It belongs to the RNase HII family. Mn(2+) serves as cofactor. Requires Mg(2+) as cofactor.

It is found in the cytoplasm. It catalyses the reaction Endonucleolytic cleavage to 5'-phosphomonoester.. Endonuclease that specifically degrades the RNA of RNA-DNA hybrids. The sequence is that of Ribonuclease HII from Chlamydia trachomatis serovar L2 (strain ATCC VR-902B / DSM 19102 / 434/Bu).